Consider the following 199-residue polypeptide: Recombination protein RecR (199 aa).

Residues 57–72 (CQSCRTYTEETLCPIC) form a C4-type zinc finger. The region spanning 81-176 (STICVVETPA…MISRIAHGVP (96 aa)) is the Toprim domain.

Belongs to the RecR family.

Functionally, may play a role in DNA repair. It seems to be involved in an RecBC-independent recombinational process of DNA repair. It may act with RecF and RecO. The chain is Recombination protein RecR from Shewanella baltica (strain OS195).